Reading from the N-terminus, the 76-residue chain is Conotoxin Im6.9 (76 aa).

Positions 1-19 (MEKLTILLLVTAVLMSTQA) are cleaved as a signal peptide. Positions 20 to 45 (LMQSGIEKRQRAKIKFFSKRKTTAER) are excised as a propeptide. 3 disulfide bridges follow: cysteine 51–cysteine 65, cysteine 58–cysteine 69, and cysteine 64–cysteine 73.

The protein belongs to the conotoxin O2 superfamily. In terms of tissue distribution, expressed by the venom duct.

It localises to the secreted. Probable neurotoxin. This Conus imperialis (Imperial cone) protein is Conotoxin Im6.9.